The following is a 151-amino-acid chain: Large ribosomal subunit protein uL13 (151 aa).

This sequence belongs to the universal ribosomal protein uL13 family. Part of the 50S ribosomal subunit.

This protein is one of the early assembly proteins of the 50S ribosomal subunit, although it is not seen to bind rRNA by itself. It is important during the early stages of 50S assembly. This chain is Large ribosomal subunit protein uL13, found in Rippkaea orientalis (strain PCC 8801 / RF-1) (Cyanothece sp. (strain PCC 8801)).